A 79-amino-acid chain; its full sequence is Protein B6 (79 aa).

The protein is Protein B6 (B6) of Human herpesvirus 6B (strain Z29) (HHV-6 variant B).